The sequence spans 344 residues: Intraflagellar transport protein 46 (344 aa).

Positions 1–16 (MDDSMDYPDRDGDDLD) are enriched in acidic residues. Residues 1–100 (MDDSMDYPDR…IANSDEAPPG (100 aa)) form a disordered region. Polar residues predominate over residues 18–30 (FQGTARSQVVQNQ).

It belongs to the IFT46 family. In terms of assembly, component of the IFT complex B, the core composed of IFT25, IFT27, IFT46, IFT52, IFT74, IFT81 and IFT88 as well as associated subunits IFT20, IFT57, IFT80 and IFT172. Interacts with IFT25, IFT52, IFT70, IFT88 and DAW1.

It is found in the cytoplasm. Its subcellular location is the cytoskeleton. The protein resides in the cilium basal body. The protein localises to the cell projection. It localises to the cilium. In terms of biological role, forms part of a complex involved in intraflagellar transport (IFT), the bi-directional movement of particles required for the assembly, maintenance and functioning of primary cilia. Plays a role in maintaining IFT complex B stability. The sequence is that of Intraflagellar transport protein 46 from Chlamydomonas reinhardtii (Chlamydomonas smithii).